We begin with the raw amino-acid sequence, 123 residues long: uncharacterized protein (123 aa).

A helical transmembrane segment spans residues 14–34 (VVLKITAVVCSVFSIRVLILA).

Its subcellular location is the membrane. This is an uncharacterized protein from Saccharomyces cerevisiae (strain ATCC 204508 / S288c) (Baker's yeast).